The sequence spans 431 residues: Protein farnesyltransferase subunit beta (431 aa).

PFTB repeat units lie at residues 130–171 (KRKI…SLCD), 182–224 (RKGI…TLLN), 231–273 (TEGV…AILR), 280–322 (VEKL…AILE), and 332–375 (KHAL…AVAE). Residues 258–261 (HGGY) and 301–304 (RSNK) contribute to the (2E,6E)-farnesyl diphosphate site. Zn(2+) is bound by residues Asp-307 and Cys-309. (2E,6E)-farnesyl diphosphate is bound at residue 310 to 313 (YSFW). Residue His-363 participates in Zn(2+) binding.

It belongs to the protein prenyltransferase subunit beta family. Heterodimer of an alpha (RAM2) and a beta (RAM1) subunit. Zn(2+) is required as a cofactor.

It is found in the cytoplasm. The catalysed reaction is L-cysteinyl-[protein] + (2E,6E)-farnesyl diphosphate = S-(2E,6E)-farnesyl-L-cysteinyl-[protein] + diphosphate. Functionally, catalyzes the transfer of a farnesyl moiety from farnesyl diphosphate to a cysteine at the fourth position from the C-terminus of several proteins having the C-terminal sequence Cys-aliphatic-aliphatic-X where X is Ser, Ala, Met, Cys, or Gln. Required for the membrane localization of proteins such as a-factor, Ras proteins and other membrane proteins containing the C-terminal CAAX motif. The beta subunit is responsible for isoprenoid and peptide-binding. The chain is Protein farnesyltransferase subunit beta from Saccharomyces cerevisiae (strain ATCC 204508 / S288c) (Baker's yeast).